We begin with the raw amino-acid sequence, 95 residues long: Large ribosomal subunit protein uL23 (95 aa).

It belongs to the universal ribosomal protein uL23 family. As to quaternary structure, part of the 50S ribosomal subunit. Contacts protein L29, and trigger factor when it is bound to the ribosome.

One of the early assembly proteins it binds 23S rRNA. One of the proteins that surrounds the polypeptide exit tunnel on the outside of the ribosome. Forms the main docking site for trigger factor binding to the ribosome. The polypeptide is Large ribosomal subunit protein uL23 (Desulfotalea psychrophila (strain LSv54 / DSM 12343)).